The following is a 369-amino-acid chain: Anhydro-N-acetylmuramic acid kinase (369 aa).

12-19 (GTSMDGVD) is an ATP binding site.

This sequence belongs to the anhydro-N-acetylmuramic acid kinase family.

It catalyses the reaction 1,6-anhydro-N-acetyl-beta-muramate + ATP + H2O = N-acetyl-D-muramate 6-phosphate + ADP + H(+). Its pathway is amino-sugar metabolism; 1,6-anhydro-N-acetylmuramate degradation. It participates in cell wall biogenesis; peptidoglycan recycling. In terms of biological role, catalyzes the specific phosphorylation of 1,6-anhydro-N-acetylmuramic acid (anhMurNAc) with the simultaneous cleavage of the 1,6-anhydro ring, generating MurNAc-6-P. Is required for the utilization of anhMurNAc either imported from the medium or derived from its own cell wall murein, and thus plays a role in cell wall recycling. In Shewanella sp. (strain ANA-3), this protein is Anhydro-N-acetylmuramic acid kinase.